A 474-amino-acid polypeptide reads, in one-letter code: tRNA-2-methylthio-N(6)-dimethylallyladenosine synthase (474 aa).

Residues 3–120 (KKLHIKTWGC…LPEMINSVRG (118 aa)) enclose the MTTase N-terminal domain. The [4Fe-4S] cluster site is built by cysteine 12, cysteine 49, cysteine 83, cysteine 157, cysteine 161, and cysteine 164. The Radical SAM core domain occupies 143-375 (RAEGPTAFVS…QERINQQAMA (233 aa)). A TRAM domain is found at 378 to 441 (RRMLGTVQRI…TNSLRGKVVR (64 aa)).

This sequence belongs to the methylthiotransferase family. MiaB subfamily. Monomer. [4Fe-4S] cluster serves as cofactor.

It is found in the cytoplasm. It catalyses the reaction N(6)-dimethylallyladenosine(37) in tRNA + (sulfur carrier)-SH + AH2 + 2 S-adenosyl-L-methionine = 2-methylsulfanyl-N(6)-dimethylallyladenosine(37) in tRNA + (sulfur carrier)-H + 5'-deoxyadenosine + L-methionine + A + S-adenosyl-L-homocysteine + 2 H(+). Its function is as follows. Catalyzes the methylthiolation of N6-(dimethylallyl)adenosine (i(6)A), leading to the formation of 2-methylthio-N6-(dimethylallyl)adenosine (ms(2)i(6)A) at position 37 in tRNAs that read codons beginning with uridine. This Citrobacter koseri (strain ATCC BAA-895 / CDC 4225-83 / SGSC4696) protein is tRNA-2-methylthio-N(6)-dimethylallyladenosine synthase.